A 250-amino-acid chain; its full sequence is L-cystine transport system ATP-binding protein TcyN (250 aa).

One can recognise an ABC transporter domain in the interval 4–244 (IEVKNLVKKF…PEQPRTRQFL (241 aa)). 36 to 43 (GPSGSGKT) serves as a coordination point for ATP.

It belongs to the ABC transporter superfamily. The complex is composed of two ATP-binding proteins (TcyN), two transmembrane proteins (TcyL) and a solute-binding protein (TcyJ).

It localises to the cell inner membrane. The enzyme catalyses L-cystine(out) + ATP + H2O = L-cystine(in) + ADP + phosphate + H(+). It carries out the reaction D-cystine(out) + ATP + H2O = D-cystine(in) + ADP + phosphate + H(+). With respect to regulation, the TcyJLN system is inhibited by L-cystine, L-cysteine, DL-2,6-diaminopimelic acid and L-cystathionine, and is stimulated by D-cysteine. In terms of biological role, part of the ABC transporter complex TcyJLN involved in L-cystine import. This high affinity cystine transporter is involved in resistance to oxidative stress by forming a L-cysteine/L-cystine shuttle system with the EamA transporter, which exports L-cysteine as reducing equivalents to the periplasm to prevent the cells from oxidative stress. Exported L-cysteine can reduce the periplasmic hydrogen peroxide to water, and then generated L-cystine is imported back into the cytoplasm via the TcyJLN complex. Functions at low cystine concentrations. The system can also transport L-cysteine, diaminopimelic acid (DAP), djenkolate, lanthionine, D-cystine, homocystine, and it mediates accumulation of the toxic compounds L-selenaproline (SCA) and L-selenocystine (SeCys). Could also facilitate threonine efflux. Responsible for energy coupling to the transport system. The chain is L-cystine transport system ATP-binding protein TcyN from Escherichia coli (strain K12).